The primary structure comprises 209 residues: Thymidylate kinase (209 aa).

Residue 10–17 (GPEGAGKT) participates in ATP binding.

The protein belongs to the thymidylate kinase family.

The catalysed reaction is dTMP + ATP = dTDP + ADP. Its function is as follows. Phosphorylation of dTMP to form dTDP in both de novo and salvage pathways of dTTP synthesis. The chain is Thymidylate kinase from Anoxybacillus flavithermus (strain DSM 21510 / WK1).